The chain runs to 942 residues: DNA polymerase I (942 aa).

The 5'-3' exonuclease domain maps to 177-269 (EPDQLADLRG…LEAARIGVYD (93 aa)). The 3'-5' exonuclease domain maps to 340 to 522 (TIVRDATALA…LTERLQRQLE (183 aa)).

The protein belongs to the DNA polymerase type-A family. In terms of assembly, single-chain monomer with multiple functions.

It carries out the reaction DNA(n) + a 2'-deoxyribonucleoside 5'-triphosphate = DNA(n+1) + diphosphate. In addition to polymerase activity, this DNA polymerase exhibits 3'-5' and 5'-3' exonuclease activity. The protein is DNA polymerase I (polA) of Chloroflexus aurantiacus (strain ATCC 29366 / DSM 635 / J-10-fl).